We begin with the raw amino-acid sequence, 127 residues long: Small ribosomal subunit protein uS11 (127 aa).

Belongs to the universal ribosomal protein uS11 family. As to quaternary structure, part of the 30S ribosomal subunit. Interacts with proteins S7 and S18. Binds to IF-3.

Located on the platform of the 30S subunit, it bridges several disparate RNA helices of the 16S rRNA. Forms part of the Shine-Dalgarno cleft in the 70S ribosome. In Streptococcus suis (strain 98HAH33), this protein is Small ribosomal subunit protein uS11.